The chain runs to 467 residues: Glycogen synthase kinase-3 (467 aa).

Residues 1–20 show a composition bias toward basic and acidic residues; the sequence is MSSKDQILEKDKKETDDNGN. The interval 1-42 is disordered; sequence MSSKDQILEKDKKETDDNGNKKTTTTTSSSSSSSSSSKPRSN. The span at 23–37 shows a compositional bias: low complexity; sequence TTTTTSSSSSSSSSS. The Protein kinase domain maps to 56–339; the sequence is YITEGVIGNG…PVEICAHPFF (284 aa). Residues 62–70 and Lys-85 contribute to the ATP site; that span reads IGNGSFGVV. Catalysis depends on Asp-179, which acts as the Proton acceptor. Tyr-214 and Tyr-220 each carry phosphotyrosine; by zakA. The segment at 400 to 467 is disordered; that stretch reads SSNQSSSSNS…TTTTTTTSNH (68 aa).

This sequence belongs to the protein kinase superfamily. CMGC Ser/Thr protein kinase family. GSK-3 subfamily. Mg(2+) serves as cofactor.

The catalysed reaction is L-seryl-[tau protein] + ATP = O-phospho-L-seryl-[tau protein] + ADP + H(+). It carries out the reaction L-threonyl-[tau protein] + ATP = O-phospho-L-threonyl-[tau protein] + ADP + H(+). Inhibited by lithium. Lithium inhibition is competitive with respect to magnesium but non-competitive with respect to the peptide substrate. During cellular differentiation, may mediate an extracellular cyclic AMP stimulated signal transduction pathway that regulates prespore and prestalk B-cell proportions through inhibition of stalk cell formation and induction of prespore cell differentiation. The cAMP receptor carC appears to activate gskA via the tyrosine kinases zakA and zak2, to stimulate prespore differentiation, while carD appears to negatively regulate gskA, to promote prestalk formation. This is Glycogen synthase kinase-3 (gskA) from Dictyostelium discoideum (Social amoeba).